We begin with the raw amino-acid sequence, 233 residues long: Small ribosomal subunit protein uS2c (233 aa).

It belongs to the universal ribosomal protein uS2 family.

Its subcellular location is the plastid. The protein resides in the chloroplast. The sequence is that of Small ribosomal subunit protein uS2c (rps2) from Staurastrum punctulatum (Green alga).